A 527-amino-acid chain; its full sequence is Putative ABC transporter peptide-binding protein BMEII0859 (527 aa).

The signal sequence occupies residues 1–23 (MRLRNFYSALALSAAVFAGPLYA).

It belongs to the bacterial solute-binding protein 5 family. As to quaternary structure, the complex is composed of two ATP-binding proteins (BMEII0863 and BMEII0864), two transmembrane proteins (BMEII0860 and BMEII0861) and a solute-binding protein (BMEII0859).

It is found in the periplasm. In terms of biological role, probably part of an ABC transporter complex that could be involved in peptide import. The polypeptide is Putative ABC transporter peptide-binding protein BMEII0859 (Brucella melitensis biotype 1 (strain ATCC 23456 / CCUG 17765 / NCTC 10094 / 16M)).